Here is a 539-residue protein sequence, read N- to C-terminus: Lysophospholipid acyltransferase LPEAT2 (539 aa).

A helical transmembrane segment spans residues 93 to 113; the sequence is LVICLPIALIRLVLFAASLAV. An HXXXXD motif motif is present at residues 178 to 183; sequence HVSYIE. 3 consecutive EF-hand domains span residues 426 to 455, 457 to 492, and 493 to 528; these read KRIF…VLTQ, LFKQ…TIPN, and LNKD…NPLL. 10 residues coordinate Ca(2+): Asp-470, Asp-472, Asp-474, Tyr-476, Glu-481, Asp-506, Asp-508, Asp-510, Arg-512, and Asp-517.

The protein belongs to the 1-acyl-sn-glycerol-3-phosphate acyltransferase family.

The protein localises to the golgi apparatus membrane. Its subcellular location is the late endosome membrane. It catalyses the reaction a 1-acyl-sn-glycero-3-phosphoethanolamine + an acyl-CoA = a 1,2-diacyl-sn-glycero-3-phosphoethanolamine + CoA. The enzyme catalyses a 1-acyl-sn-glycero-3-phosphocholine + an acyl-CoA = a 1,2-diacyl-sn-glycero-3-phosphocholine + CoA. The catalysed reaction is a 1-acyl-sn-glycero-3-phospho-L-serine + an acyl-CoA = a 1,2-diacyl-sn-glycero-3-phospho-L-serine + CoA. It functions in the pathway lipid metabolism; phospholipid metabolism. Its function is as follows. Possesses acyl-CoA-dependent lysophospholipid acyltransferase activity with a subset of lysophospholipids as substrates. Exhibits strong acylation activity on lysophosphatidylethanolamine (LPE), and lower activity on lysophosphatidylcholine (LPC) and lysophosphatidylserine (LPS). Exhibits acylation activity on both LPE and LPC. Has a preference for 18:1-LPE over 16:0-LPE as acceptor. Palmitoyl-CoA (16:0-CoA) is a better acyl donor than oleoyl-CoA (18:1-CoA). Among several different acyl-CoA species the best acyl donor is eicosanoyl-CoA (20:0-CoA). Activity is calcium-independent. Its activity is essential for maintaining adequate levels of phosphatidylethanolamine (PE), LPE and LPC in the cells, which is crucial for plant growth regulation. The chain is Lysophospholipid acyltransferase LPEAT2 from Arabidopsis thaliana (Mouse-ear cress).